Consider the following 78-residue polypeptide: MKNIKNSPKLQLKSTGTPFQGTVDYKNIALLRKYISTEGKILPRRITGLTAKQQRAVAKAIKNARMVGLLPFINLEGY.

It belongs to the bacterial ribosomal protein bS18 family. In terms of assembly, part of the 30S ribosomal subunit.

The protein localises to the plastid. It localises to the chloroplast. The chain is Small ribosomal subunit protein bS18c from Oltmannsiellopsis viridis (Marine flagellate).